The following is a 70-amino-acid chain: MAIYRNRISPIKPTDAVDYKDIDLLRKFITEQGKILPKRSTGLTSKQQKKLTKAIKQARILSLLPFLNKD.

It belongs to the bacterial ribosomal protein bS18 family. In terms of assembly, part of the 30S ribosomal subunit.

It localises to the plastid. It is found in the chloroplast. The protein is Small ribosomal subunit protein bS18c of Pyropia yezoensis (Susabi-nori).